Reading from the N-terminus, the 358-residue chain is Trace amine-associated receptor 7h (358 aa).

Over 1–47 the chain is Extracellular; the sequence is MATDDESFPWDQDSILSRDLLSALSPQLCYENLNRSCVRSPYSPGPR. N-linked (GlcNAc...) asparagine glycosylation is present at N34. Disulfide bonds link C37-C201 and C120-C205. Residues 48–68 form a helical membrane-spanning segment; sequence LILYAVFGFGAVLAVCGNLLV. Residues 69-83 lie on the Cytoplasmic side of the membrane; that stretch reads MTSILHFRQLHSPAN. The chain crosses the membrane as a helical span at residues 84–104; sequence FLVASLACADLLVGLTVMPFS. At 105–125 the chain is on the extracellular side; that stretch reads MVRSVEGCWYFGDSYCKLHTS. The helical transmembrane segment at 126–143 threads the bilayer; sequence FDMSFCCSSLLHLCFISV. The Cytoplasmic segment spans residues 144–166; that stretch reads DRYIAVSDPLIYPIRFTASVSGK. The chain crosses the membrane as a helical span at residues 167–187; the sequence is CITFSWFLSIIYGFSLIYTGA. At 188–217 the chain is on the extracellular side; it reads SEAGLKDLVSALSCVGGCQIPMNQSCVLIN. N210 carries N-linked (GlcNAc...) asparagine glycosylation. A helical membrane pass occupies residues 218-238; the sequence is FLLFLVPTLVMMTVYSKIFLI. Topologically, residues 239–274 are cytoplasmic; that stretch reads AKQQAQNMEKMSKQTTRASDSYKDRVAKRERKAAKT. Residues 275–295 form a helical membrane-spanning segment; the sequence is LGIAVAAFLLSWLPYLIDSII. At 296–309 the chain is on the extracellular side; that stretch reads DAFLGFITPSYVYE. A helical membrane pass occupies residues 310–333; it reads ILVWIVYYNSAMNPLIYAFFYPWF. Residues 334 to 358 are Cytoplasmic-facing; it reads RNAIKLIVTGKILKQNSSTTNLFSE.

It belongs to the G-protein coupled receptor 1 family.

The protein resides in the cell membrane. In terms of biological role, olfactory receptor specific for N,N-dimethylalkylamines trace amines. Trace amine compounds are enriched in animal body fluids and act on trace amine-associated receptors (TAARs) to elicit both intraspecific and interspecific innate behaviors. Ligand-binding causes a conformation change that triggers signaling via G(s)-class of G alpha proteins (GNAL or GNAS). This is Trace amine-associated receptor 7h from Rattus norvegicus (Rat).